The following is a 261-amino-acid chain: Triosephosphate isomerase (261 aa).

Residues Asn11 and Lys13 each coordinate D-glyceraldehyde 3-phosphate. The active-site Electrophile is His102. Catalysis depends on Glu174, which acts as the Proton acceptor. Positions 180, 239, and 241 each coordinate D-glyceraldehyde 3-phosphate.

This sequence belongs to the triosephosphate isomerase family. As to quaternary structure, homodimer.

The catalysed reaction is D-glyceraldehyde 3-phosphate = dihydroxyacetone phosphate. The protein operates within carbohydrate biosynthesis; gluconeogenesis. Its pathway is carbohydrate degradation; glycolysis; D-glyceraldehyde 3-phosphate from glycerone phosphate: step 1/1. Its function is as follows. Catalyzes the interconversion of glyceraldehyde 3-phosphate and dihydroxyacetone phosphate in the glycolytic and gluconeogenic pathways. The chain is Triosephosphate isomerase from Entamoeba histolytica (strain ATCC 30459 / HM-1:IMSS / ABRM).